The chain runs to 416 residues: UDP-N-acetylglucosamine 1-carboxyvinyltransferase (416 aa).

22–23 serves as a coordination point for phosphoenolpyruvate; it reads KN. Arginine 92 contributes to the UDP-N-acetyl-alpha-D-glucosamine binding site. The Proton donor role is filled by cysteine 116. Cysteine 116 carries the 2-(S-cysteinyl)pyruvic acid O-phosphothioketal modification. UDP-N-acetyl-alpha-D-glucosamine contacts are provided by residues 121–125, aspartate 304, and isoleucine 326; that span reads RPVDQ.

This sequence belongs to the EPSP synthase family. MurA subfamily.

It is found in the cytoplasm. The enzyme catalyses phosphoenolpyruvate + UDP-N-acetyl-alpha-D-glucosamine = UDP-N-acetyl-3-O-(1-carboxyvinyl)-alpha-D-glucosamine + phosphate. The protein operates within cell wall biogenesis; peptidoglycan biosynthesis. In terms of biological role, cell wall formation. Adds enolpyruvyl to UDP-N-acetylglucosamine. This is UDP-N-acetylglucosamine 1-carboxyvinyltransferase from Cupriavidus metallidurans (strain ATCC 43123 / DSM 2839 / NBRC 102507 / CH34) (Ralstonia metallidurans).